Reading from the N-terminus, the 253-residue chain is NAC transcription factor 32 (253 aa).

In terms of domain architecture, NAC spans 10-160; the sequence is FPPGFRFHPT…DWVLCRIYNK (151 aa). Residues 106 to 166 mediate DNA binding; sequence VGIKKALVFY…IYNKKGVIEK (61 aa).

In terms of tissue distribution, expressed in germinating seeds, roots, leaf veins, open flowers and silique stalks.

It localises to the nucleus. Transcriptional activator that positively regulates age-dependent senescence, dark-induced leaf senescence and stress-induced senescence. Regulates leaf senescence through the modulation of the expression of senescence-associated genes SGR1/NYE1, SAG113 and SAUR36/SAG201, which are involved in chlorophyll degradation, and abscisic acid (ABA) and auxin promotion of senescence, respectively. Promotes reactive oxygen species (ROS) production during age-dependent and stress-induced senescence. Positively regulates auxin-mediated responses in roots. Stress-responsive NAC transcription factor involved in ABA-inducible leaf senescence signaling. Required for normal seed development and morphology. The chain is NAC transcription factor 32 from Arabidopsis thaliana (Mouse-ear cress).